We begin with the raw amino-acid sequence, 692 residues long: Elongation factor G (692 aa).

Residues 8 to 283 (NRIRNIGIAA…AVIDYLPAPT (276 aa)) enclose the tr-type G domain. Residues 17–24 (AHIDAGKT), 81–85 (DTPGH), and 135–138 (NKMD) each bind GTP.

Belongs to the TRAFAC class translation factor GTPase superfamily. Classic translation factor GTPase family. EF-G/EF-2 subfamily.

Its subcellular location is the cytoplasm. Its function is as follows. Catalyzes the GTP-dependent ribosomal translocation step during translation elongation. During this step, the ribosome changes from the pre-translocational (PRE) to the post-translocational (POST) state as the newly formed A-site-bound peptidyl-tRNA and P-site-bound deacylated tRNA move to the P and E sites, respectively. Catalyzes the coordinated movement of the two tRNA molecules, the mRNA and conformational changes in the ribosome. This Helicobacter pylori (strain Shi470) protein is Elongation factor G.